The primary structure comprises 1378 residues: DNA-directed RNA polymerase subunit beta (1378 aa).

Belongs to the RNA polymerase beta chain family. As to quaternary structure, the RNAP catalytic core consists of 2 alpha, 1 beta, 1 beta' and 1 omega subunit. When a sigma factor is associated with the core the holoenzyme is formed, which can initiate transcription.

The enzyme catalyses RNA(n) + a ribonucleoside 5'-triphosphate = RNA(n+1) + diphosphate. DNA-dependent RNA polymerase catalyzes the transcription of DNA into RNA using the four ribonucleoside triphosphates as substrates. This is DNA-directed RNA polymerase subunit beta from Campylobacter jejuni subsp. jejuni serotype O:23/36 (strain 81-176).